The sequence spans 127 residues: UPF0389 protein GA21628 (127 aa).

The chain crosses the membrane as a helical span at residues 69-88; the sequence is IRLANIMIALTVIGCGIMVY.

The protein belongs to the UPF0389 family.

The protein localises to the membrane. The protein is UPF0389 protein GA21628 of Drosophila pseudoobscura pseudoobscura (Fruit fly).